Reading from the N-terminus, the 210-residue chain is ATP-dependent Clp protease proteolytic subunit (210 aa).

Residue S106 is the Nucleophile of the active site. H131 is a catalytic residue.

This sequence belongs to the peptidase S14 family. In terms of assembly, fourteen ClpP subunits assemble into 2 heptameric rings which stack back to back to give a disk-like structure with a central cavity, resembling the structure of eukaryotic proteasomes.

It is found in the cytoplasm. The enzyme catalyses Hydrolysis of proteins to small peptides in the presence of ATP and magnesium. alpha-casein is the usual test substrate. In the absence of ATP, only oligopeptides shorter than five residues are hydrolyzed (such as succinyl-Leu-Tyr-|-NHMec, and Leu-Tyr-Leu-|-Tyr-Trp, in which cleavage of the -Tyr-|-Leu- and -Tyr-|-Trp bonds also occurs).. Functionally, cleaves peptides in various proteins in a process that requires ATP hydrolysis. Has a chymotrypsin-like activity. Plays a major role in the degradation of misfolded proteins. The polypeptide is ATP-dependent Clp protease proteolytic subunit (Bradyrhizobium sp. (strain BTAi1 / ATCC BAA-1182)).